We begin with the raw amino-acid sequence, 485 residues long: Aspartyl/glutamyl-tRNA(Asn/Gln) amidotransferase subunit B (485 aa).

Belongs to the GatB/GatE family. GatB subfamily. As to quaternary structure, heterotrimer of A, B and C subunits.

It carries out the reaction L-glutamyl-tRNA(Gln) + L-glutamine + ATP + H2O = L-glutaminyl-tRNA(Gln) + L-glutamate + ADP + phosphate + H(+). The catalysed reaction is L-aspartyl-tRNA(Asn) + L-glutamine + ATP + H2O = L-asparaginyl-tRNA(Asn) + L-glutamate + ADP + phosphate + 2 H(+). In terms of biological role, allows the formation of correctly charged Asn-tRNA(Asn) or Gln-tRNA(Gln) through the transamidation of misacylated Asp-tRNA(Asn) or Glu-tRNA(Gln) in organisms which lack either or both of asparaginyl-tRNA or glutaminyl-tRNA synthetases. The reaction takes place in the presence of glutamine and ATP through an activated phospho-Asp-tRNA(Asn) or phospho-Glu-tRNA(Gln). This chain is Aspartyl/glutamyl-tRNA(Asn/Gln) amidotransferase subunit B, found in Borrelia garinii subsp. bavariensis (strain ATCC BAA-2496 / DSM 23469 / PBi) (Borreliella bavariensis).